Consider the following 509-residue polypeptide: 2-isopropylmalate synthase (509 aa).

A Pyruvate carboxyltransferase domain is found at 5-267 (IQIFDTTLRD…QTALNLEETK (263 aa)). Mn(2+) is bound by residues D14, H202, H204, and N238. Residues 391–509 (KLETLQLQYV…AAENVEKVGN (119 aa)) are regulatory domain.

This sequence belongs to the alpha-IPM synthase/homocitrate synthase family. LeuA type 1 subfamily. In terms of assembly, homodimer. Mn(2+) is required as a cofactor.

The protein resides in the cytoplasm. It catalyses the reaction 3-methyl-2-oxobutanoate + acetyl-CoA + H2O = (2S)-2-isopropylmalate + CoA + H(+). It participates in amino-acid biosynthesis; L-leucine biosynthesis; L-leucine from 3-methyl-2-oxobutanoate: step 1/4. Catalyzes the condensation of the acetyl group of acetyl-CoA with 3-methyl-2-oxobutanoate (2-ketoisovalerate) to form 3-carboxy-3-hydroxy-4-methylpentanoate (2-isopropylmalate). The polypeptide is 2-isopropylmalate synthase (Staphylococcus aureus (strain USA300)).